A 648-amino-acid chain; its full sequence is Probable alpha-galactosidase D (648 aa).

The signal sequence occupies residues 1–16; it reads MEFIVSLLLLSPALVA. Residues asparagine 84 and asparagine 90 are each glycosylated (N-linked (GlcNAc...) asparagine). Cysteine 123 and cysteine 156 form a disulfide bridge. Aspartate 154 (nucleophile) is an active-site residue. Position 199-203 (199-203) interacts with substrate; sequence EWGID. Aspartate 221 acts as the Proton donor in catalysis. N-linked (GlcNAc...) asparagine glycosylation is found at asparagine 339, asparagine 350, asparagine 505, and asparagine 572.

The protein belongs to the glycosyl hydrolase 27 family.

The protein resides in the secreted. The enzyme catalyses Hydrolysis of terminal, non-reducing alpha-D-galactose residues in alpha-D-galactosides, including galactose oligosaccharides, galactomannans and galactolipids.. Hydrolyzes a variety of simple alpha-D-galactoside as well as more complex molecules such as oligosaccharides and polysaccharides. The protein is Probable alpha-galactosidase D (aglD) of Aspergillus fumigatus (strain CBS 144.89 / FGSC A1163 / CEA10) (Neosartorya fumigata).